The sequence spans 78 residues: NAD(P)H-quinone oxidoreductase subunit L (78 aa).

Helical transmembrane passes span 10–30 (LFVI…IPLG) and 48–68 (LLIY…APFL).

The protein belongs to the complex I NdhL subunit family. In terms of assembly, NDH-1 can be composed of about 15 different subunits; different subcomplexes with different compositions have been identified which probably have different functions.

It localises to the cellular thylakoid membrane. The catalysed reaction is a plastoquinone + NADH + (n+1) H(+)(in) = a plastoquinol + NAD(+) + n H(+)(out). The enzyme catalyses a plastoquinone + NADPH + (n+1) H(+)(in) = a plastoquinol + NADP(+) + n H(+)(out). Functionally, NDH-1 shuttles electrons from an unknown electron donor, via FMN and iron-sulfur (Fe-S) centers, to quinones in the respiratory and/or the photosynthetic chain. The immediate electron acceptor for the enzyme in this species is believed to be plastoquinone. Couples the redox reaction to proton translocation, and thus conserves the redox energy in a proton gradient. Cyanobacterial NDH-1 also plays a role in inorganic carbon-concentration. The sequence is that of NAD(P)H-quinone oxidoreductase subunit L from Prochlorococcus marinus (strain SARG / CCMP1375 / SS120).